We begin with the raw amino-acid sequence, 256 residues long: Spore coat polysaccharide biosynthesis protein SpsA (256 aa).

Cysteines 155 and 243 form a disulfide. Residue Asp191 is part of the active site.

This sequence belongs to the glycosyltransferase 2 family. As to quaternary structure, monomer in solution.

It functions in the pathway spore coat biogenesis; spore coat polysaccharide biosynthesis. In terms of biological role, glycosyltransferase implicated in the synthesis of the spore coat. The chain is Spore coat polysaccharide biosynthesis protein SpsA (spsA) from Bacillus subtilis (strain 168).